The sequence spans 585 residues: Adenine deaminase (585 aa).

It belongs to the metallo-dependent hydrolases superfamily. Adenine deaminase family. Mn(2+) is required as a cofactor.

It catalyses the reaction adenine + H2O + H(+) = hypoxanthine + NH4(+). The chain is Adenine deaminase from Halalkalibacterium halodurans (strain ATCC BAA-125 / DSM 18197 / FERM 7344 / JCM 9153 / C-125) (Bacillus halodurans).